The chain runs to 347 residues: MLIKQGERLINARNWSELVKPDQILREEETASGTHGKFVCEPLERGYGTTIGNAMRRVLLASLQGAAFVSVKIIGVQHEFTTIHGVLEDITDVILNIKQVRLRMDTEEPQRLTLRVERKGPVTAADIVANQHVEVLNPDLHIATLTEDVVLEMELEVRMGKGYVPADMHEGLADEIGLIKLDSSFSPVRKVAYTVEQARVGQMTNYDRLLLEVWTDGSLTPEDAIAYSAKIIKDQISVFINFDERVSGDMRNGSGESGEVNEHLFKSIDDLELSVRATNCLRSANIGLVGELVQRTEAEMLKTKNFGRKSLDEIKGVLLGMGLDFGMKVDSFDKKYQEWKRKQQNEA.

The alpha N-terminal domain (alpha-NTD) stretch occupies residues 1–243 (MLIKQGERLI…DQISVFINFD (243 aa)). Residues 260 to 347 (VNEHLFKSID…EWKRKQQNEA (88 aa)) are alpha C-terminal domain (alpha-CTD).

The protein belongs to the RNA polymerase alpha chain family. As to quaternary structure, homodimer. The RNAP catalytic core consists of 2 alpha, 1 beta, 1 beta' and 1 omega subunit. When a sigma factor is associated with the core the holoenzyme is formed, which can initiate transcription.

It catalyses the reaction RNA(n) + a ribonucleoside 5'-triphosphate = RNA(n+1) + diphosphate. Its function is as follows. DNA-dependent RNA polymerase catalyzes the transcription of DNA into RNA using the four ribonucleoside triphosphates as substrates. The chain is DNA-directed RNA polymerase subunit alpha from Desulfovibrio desulfuricans (strain ATCC 27774 / DSM 6949 / MB).